The sequence spans 313 residues: Protein FixB (313 aa).

255-283 (LYLAVGISGQIQHMVGANASQTIFAINKD) is a binding site for FAD.

The protein belongs to the ETF alpha-subunit/FixB family. As to quaternary structure, heterodimer of FixA and FixB.

It functions in the pathway amine and polyamine metabolism; carnitine metabolism. In terms of biological role, required for anaerobic carnitine reduction. May bring reductant to CaiA. The chain is Protein FixB from Escherichia coli O6:K15:H31 (strain 536 / UPEC).